A 351-amino-acid chain; its full sequence is Autoinducer 2 import system permease protein LsrC (351 aa).

9 helical membrane-spanning segments follow: residues 14–34 (LLAI…YFSL), 39–59 (MIFS…LVML), 70–90 (ITGL…GLVA), 93–113 (LFAL…VTWL), 115–135 (IPAI…MLLL), 155–175 (ILFS…AMAW), 213–233 (MNGV…GFIP), 252–272 (GISL…AFLL), and 284–304 (LPAW…LVFD).

Belongs to the binding-protein-dependent transport system permease family. AraH/RbsC subfamily. The complex is composed of two ATP-binding proteins (LsrA), two transmembrane proteins (LsrC and LsrD) and a solute-binding protein (LsrB).

The protein resides in the cell inner membrane. In terms of biological role, part of the ABC transporter complex LsrABCD involved in autoinducer 2 (AI-2) import. Probably responsible for the translocation of the substrate across the membrane. This is Autoinducer 2 import system permease protein LsrC (lsrC) from Yersinia pseudotuberculosis serotype O:3 (strain YPIII).